Reading from the N-terminus, the 344-residue chain is Ferrochelatase (344 aa).

Positions 190 and 270 each coordinate Fe cation.

The protein belongs to the ferrochelatase family.

The protein resides in the cytoplasm. The enzyme catalyses heme b + 2 H(+) = protoporphyrin IX + Fe(2+). It participates in porphyrin-containing compound metabolism; protoheme biosynthesis; protoheme from protoporphyrin-IX: step 1/1. In terms of biological role, catalyzes the ferrous insertion into protoporphyrin IX. This chain is Ferrochelatase, found in Rickettsia felis (strain ATCC VR-1525 / URRWXCal2) (Rickettsia azadi).